The chain runs to 195 residues: Envelope glycoprotein L (195 aa).

An N-terminal signal peptide occupies residues 1–25; it reads MKIYRVLVHLSFVLGMFTKTNTVLA. An interaction with gH region spans residues 28–157; sequence KYDLVHGFMR…LIAPADISCY (130 aa). The region spanning 28–195 is the gL alphaherpesvirus-type domain; that stretch reads KYDLVHGFMR…TTSGSRRANA (168 aa). Intrachain disulfides connect Cys-49/Cys-78 and Cys-156/Cys-178.

This sequence belongs to the herpesviridae glycoprotein L (gL) family. Alphaherpesvirinae gL subfamily. Interacts with glycoprotein H (gH); this interaction is necessary for the correct processing and cell surface expression of gH. The heterodimer gH/gL seems to interact with gB trimers during fusion.

Its subcellular location is the virion membrane. It localises to the host cell membrane. The protein resides in the host Golgi apparatus. It is found in the host trans-Golgi network. The heterodimer glycoprotein H-glycoprotein L is required for the fusion of viral and plasma membranes leading to virus entry into the host cell. Acts as a functional inhibitor of gH and maintains gH in an inhibited form. Upon binding to host integrins, gL dissociates from gH leading to activation of the viral fusion glycoproteins gB and gH. This Gallus gallus (Chicken) protein is Envelope glycoprotein L.